A 211-amino-acid polypeptide reads, in one-letter code: Arginine exporter protein ArgO (211 aa).

The next 6 helical transmembrane spans lie at 1 to 21, 37 to 57, 68 to 88, 111 to 131, 147 to 167, and 182 to 202; these read MFSYYFQGLALGAAMILPLGP, IMIALLCAISDLVLICAGIFG, LLALVTWGGVVFLLWYGFGAF, IIATMLAVTWLNPHVYLDTFV, WFALGTISASFLWFFGLAILA, and IINLVVGCVMWFIALQLARDG.

This sequence belongs to the LysE/ArgO transporter (TC 2.A.75) family.

The protein localises to the cell inner membrane. It catalyses the reaction L-arginine(in) = L-arginine(out). Its function is as follows. Involved in the export of arginine. Important to control the intracellular level of arginine and the correct balance between arginine and lysine. The protein is Arginine exporter protein ArgO of Escherichia coli O157:H7.